Consider the following 152-residue polypeptide: Deoxyuridine 5'-triphosphate nucleotidohydrolase (152 aa).

Residues 71-73 (RSG), asparagine 84, 88-90 (LID), and methionine 98 contribute to the substrate site.

It belongs to the dUTPase family. Mg(2+) serves as cofactor.

The enzyme catalyses dUTP + H2O = dUMP + diphosphate + H(+). It participates in pyrimidine metabolism; dUMP biosynthesis; dUMP from dCTP (dUTP route): step 2/2. Functionally, this enzyme is involved in nucleotide metabolism: it produces dUMP, the immediate precursor of thymidine nucleotides and it decreases the intracellular concentration of dUTP so that uracil cannot be incorporated into DNA. This Aeromonas hydrophila subsp. hydrophila (strain ATCC 7966 / DSM 30187 / BCRC 13018 / CCUG 14551 / JCM 1027 / KCTC 2358 / NCIMB 9240 / NCTC 8049) protein is Deoxyuridine 5'-triphosphate nucleotidohydrolase.